Here is a 248-residue protein sequence, read N- to C-terminus: MVLFFQIMVWCIVAGLGLYVYATWRFEAKVKEKMSAIRKTWYLLFVLGAMVYWTYEPTSLFTHWERYLIVAVSFALIDAFIFLSAYVKKLAGSELETDTREILEENNEMLHMYLNRLKTYQYLLKNEPIHVYYGSIDAYAEGIDKLLKTYADKMNLTASLCHYSTQADKDRLTEHMDDPADVQTRLDRKDVYYDQYGKVVLIPFTIETQNYVIKLTSDSIVTEFDYLLFTSLTSIYDLVLPIEEEGEG.

Residues 1 to 3 are Extracellular-facing; sequence MVL. A helical membrane pass occupies residues 4-21; sequence FFQIMVWCIVAGLGLYVY. The Cytoplasmic segment spans residues 22–41; the sequence is ATWRFEAKVKEKMSAIRKTW. A helical transmembrane segment spans residues 42–64; it reads YLLFVLGAMVYWTYEPTSLFTHW. Topologically, residues 65–67 are extracellular; the sequence is ERY. A helical membrane pass occupies residues 68-87; sequence LIVAVSFALIDAFIFLSAYV. The Cytoplasmic segment spans residues 88–248; sequence KKLAGSELET…VLPIEEEGEG (161 aa).

This sequence belongs to the SpoIISA toxin family. As to quaternary structure, probably forms an oligomer; X-ray data suggests the inactive complex forms a heterotetramer of SpoIISA(2)-SpoIISB(2), which inactivates the toxic activity of SpoIISA.

The protein resides in the cell membrane. Its function is as follows. Toxic component of a type II toxin-antitoxin (TA) system. Its toxic activity is neutralized by cognate antitoxin SpoIISB. Expression in the absence of SpoIISB permits sporulation to stage II, when plasmolysis zones and holes in the peptidoglycan layer are observed, resulting in cell death. Lethal when synthesized during vegetative growth in the absence of SpoIISB. In E.coli both the membrane bound and soluble domain are required in cis for toxin activity. This Bacillus subtilis (strain 168) protein is Stage II sporulation protein SA (spoIISA).